Consider the following 231-residue polypeptide: Acyl-protein thioesterase 1 (231 aa).

Residues Ser-121, Asp-178, and His-211 each act as charge relay system in the active site.

This sequence belongs to the AB hydrolase superfamily. AB hydrolase 2 family.

It is found in the cytoplasm. The protein resides in the nucleus. The enzyme catalyses S-hexadecanoyl-L-cysteinyl-[protein] + H2O = L-cysteinyl-[protein] + hexadecanoate + H(+). Hydrolyzes fatty acids from S-acylated cysteine residues in proteins with a strong preference for palmitoylated G-alpha proteins over other acyl substrates. Mediates the deacylation of G-alpha proteins such as GPA1 in vivo, but has weak or no activity toward palmitoylated Ras proteins. Has weak lysophospholipase activity in vitro; however such activity may not exist in vivo. The polypeptide is Acyl-protein thioesterase 1 (Candida albicans (strain SC5314 / ATCC MYA-2876) (Yeast)).